The following is a 205-amino-acid chain: Ribosomal RNA small subunit methyltransferase G (205 aa).

S-adenosyl-L-methionine is bound by residues glycine 66, phenylalanine 71, 119 to 120 (IE), and arginine 135.

This sequence belongs to the methyltransferase superfamily. RNA methyltransferase RsmG family.

The protein localises to the cytoplasm. The catalysed reaction is guanosine(527) in 16S rRNA + S-adenosyl-L-methionine = N(7)-methylguanosine(527) in 16S rRNA + S-adenosyl-L-homocysteine. Functionally, specifically methylates the N7 position of guanine in position 527 of 16S rRNA. The protein is Ribosomal RNA small subunit methyltransferase G of Rhizobium etli (strain CIAT 652).